We begin with the raw amino-acid sequence, 399 residues long: Serine/threonine-protein kinase PknL (399 aa).

Topologically, residues 1–368 (MVEAGTRDPL…FIWARQHARR (368 aa)) are cytoplasmic. Positions 19-278 (YLVQAKIASG…IAMGADLEAI (260 aa)) constitute a Protein kinase domain. Residues 25 to 33 (IASGGTSTV) and Lys48 contribute to the ATP site. Thr32 is subject to Phosphothreonine; by autocatalysis. A Phosphothreonine; by autocatalysis modification is found at Thr62. Asp142 (proton acceptor) is an active-site residue. A phosphothreonine; by autocatalysis mark is found at Thr173, Thr175, and Thr323. The interval 312-346 (GQLGAKPVHHPTRQLTRQPGDCSEPASGSEPEHEP) is disordered. The helical transmembrane segment at 369-389 (MVLVWVSVVLAITGLVASAAW) threads the bilayer. Residues 390-399 (TIGSNLSGLL) are Extracellular-facing.

Belongs to the protein kinase superfamily. Ser/Thr protein kinase family. In terms of processing, autophosphorylated. Thr-173 is required for autophosphorylation and transphosphorylation activities. Thr-175 is not necessary for autophosphorylation activity, but is required for full kinase activity.

The protein localises to the cell membrane. It catalyses the reaction L-seryl-[protein] + ATP = O-phospho-L-seryl-[protein] + ADP + H(+). The enzyme catalyses L-threonyl-[protein] + ATP = O-phospho-L-threonyl-[protein] + ADP + H(+). Functionally, phosphorylates the DNA-binding protein MT2231. May be involved in the regulation of cell division and cell envelope biosynthesis. The protein is Serine/threonine-protein kinase PknL (pknL) of Mycobacterium tuberculosis (strain CDC 1551 / Oshkosh).